A 448-amino-acid chain; its full sequence is Asparagine--tRNA ligase (448 aa).

Belongs to the class-II aminoacyl-tRNA synthetase family. As to quaternary structure, homodimer.

Its subcellular location is the cytoplasm. It carries out the reaction tRNA(Asn) + L-asparagine + ATP = L-asparaginyl-tRNA(Asn) + AMP + diphosphate + H(+). The polypeptide is Asparagine--tRNA ligase (Streptococcus agalactiae serotype Ia (strain ATCC 27591 / A909 / CDC SS700)).